The sequence spans 414 residues: Serine-type anaerobic sulfatase-maturating enzyme (414 aa).

The Radical SAM core domain maps to 5–250; it reads TYAPFAKPLY…LCTIFDEWVK (246 aa). 2 residues coordinate [4Fe-4S] cluster: cysteine 24 and cysteine 28. Tyrosine 30 contacts S-adenosyl-L-methionine. Residue cysteine 31 participates in [4Fe-4S] cluster binding. Residues glycine 76, serine 131, and arginine 143 each coordinate S-adenosyl-L-methionine. Positions 276, 282, and 297 each coordinate [4Fe-4S] cluster. The active-site Proton acceptor is the aspartate 298. Residues cysteine 339, cysteine 342, cysteine 348, cysteine 352, and cysteine 371 each contribute to the [4Fe-4S] cluster site.

Belongs to the radical SAM superfamily. Anaerobic sulfatase-maturating enzyme family. [4Fe-4S] cluster serves as cofactor.

The catalysed reaction is L-seryl-[sulfatase] + S-adenosyl-L-methionine = 3-oxo-L-alanyl-[sulfatase] + 5'-deoxyadenosine + L-methionine + H(+). It participates in protein modification; sulfatase oxidation. In terms of biological role, involved in 'Ser-type' sulfatase maturation under anaerobic conditions. Links the heparin and the chondroitin sulfate utilization pathways which contribute to the colonization of the intestinal tract. May catalyze the activation of chondro-6-sulfatase, i.e. the post-translational modification of a specific serine residue into 3-oxoalanine (also known as C(alpha)-formylglycine (FGly)), by a free radical chemical mechanism initiated via the reductive cleavage of S-adenosyl-L-methionine (SAM). Is also able to oxidize a cysteine residue in a synthetic substrate to FGly in vitro, but not in a recombinant Cys-type sulfatase in vivo. But since B.thetaiotaomicron possesses only Ser-type sulfatases, the oxidation of serine residues to FGly is the sole physiological activity. The polypeptide is Serine-type anaerobic sulfatase-maturating enzyme (chuR) (Bacteroides thetaiotaomicron (strain ATCC 29148 / DSM 2079 / JCM 5827 / CCUG 10774 / NCTC 10582 / VPI-5482 / E50)).